A 96-amino-acid chain; its full sequence is MNYVKIIEKNKNFIELELVNDDHSLSNLVKEILLAKDGVILASYGVEHPVLDPDTGRYISNPTIMLKTDEKTDAETVLKEALKDIVDLCNKTLEDL.

It belongs to the archaeal Rpo11/eukaryotic RPB11/RPC19 RNA polymerase subunit family. As to quaternary structure, part of the RNA polymerase complex.

The protein resides in the cytoplasm. The enzyme catalyses RNA(n) + a ribonucleoside 5'-triphosphate = RNA(n+1) + diphosphate. DNA-dependent RNA polymerase (RNAP) catalyzes the transcription of DNA into RNA using the four ribonucleoside triphosphates as substrates. The protein is DNA-directed RNA polymerase subunit Rpo11 of Methanococcus maripaludis (strain DSM 14266 / JCM 13030 / NBRC 101832 / S2 / LL).